The following is a 206-amino-acid chain: Small ribosomal subunit protein uS4 (206 aa).

An S4 RNA-binding domain is found at T96–K156.

It belongs to the universal ribosomal protein uS4 family. As to quaternary structure, part of the 30S ribosomal subunit. Contacts protein S5. The interaction surface between S4 and S5 is involved in control of translational fidelity.

Functionally, one of the primary rRNA binding proteins, it binds directly to 16S rRNA where it nucleates assembly of the body of the 30S subunit. With S5 and S12 plays an important role in translational accuracy. This is Small ribosomal subunit protein uS4 from Shewanella sp. (strain MR-4).